We begin with the raw amino-acid sequence, 328 residues long: tRNA uridine(34) hydroxylase (328 aa).

The 95-residue stretch at 130 to 224 (LDKDTVVLDT…YGKDPEVQGE (95 aa)) folds into the Rhodanese domain. The active-site Cysteine persulfide intermediate is Cys-184.

Belongs to the TrhO family.

The catalysed reaction is uridine(34) in tRNA + AH2 + O2 = 5-hydroxyuridine(34) in tRNA + A + H2O. Its function is as follows. Catalyzes oxygen-dependent 5-hydroxyuridine (ho5U) modification at position 34 in tRNAs. This Streptococcus pneumoniae (strain ATCC 700669 / Spain 23F-1) protein is tRNA uridine(34) hydroxylase.